A 110-amino-acid polypeptide reads, in one-letter code: Minor capsid protein VP2 (110 aa).

Belongs to the vesivirus VP2 protein family. As to quaternary structure, homooligomer. The portal-like structure consists in 12 copies of VP2. Interacts with capsid protein VP1.

It localises to the virion. The protein localises to the host cytoplasm. In terms of biological role, minor structural protein that forms a portal-like structure at a unique three-fold axis of symmetry, following binding to the host receptor. The channel formed by VP2 may allow the delivery of the viral genome through the host endosomal membrane. The chain is Minor capsid protein VP2 from Otariidae (fur seals &amp; sea lions).